A 1185-amino-acid chain; its full sequence is MLELNNFDSIRIGLASPDKIRQWSSGEVKKPETINYRTLKPERDGLFCERIFGPTRDWECHCGKYKRVRYKGVVCDRCGVEVTRSKVRRERLGHIELAAPVSHIWYFKGIPSRMGLLLDMSPRALEKVLYFVSYIVIEPGDTPLLKKQLLTETEYREYRDKFGNNFKAGMGAEAIKVLLVEINLEELARELRQELKEVSGQRKIRAIRRLEVVEAFKKSGNRPEWMIMDVVPVIPPELRPMVQLDGGRFATSDLNDLYRRVINRNNRLKRLLDLGAPDIIVRNEKRMLQEAVDALIDNGRRGRPVTGPGNRPLKSLSDMLKGKQGRFRQNLLGKRVDYSGRSVIVVGPRLKMHQCGLPKEMALELFKPFVMKKLVNDGHAHNIKSAKRMVERVRPEVWDVLEDVIKEHPVMLNRAPTLHRLGIQAFEPVLVEGRAIKIHPMVCTAYNADFDGDQMAVHVPLSAEAQAEARLLMLAANNILNPKDGKPVASPTQDMVLGSYYLTMDRDGDLGEGLIFKDEQEAMLAYDNKQVSLQAKITVRRKNGERLQTTVGRIIFNEVIPEELGYINKVCDKKTLSKIVADCYRRLGNAHTAELLDGIKELGYKYSTRAGITIGVPDITIPEAKKEILAKAEEQVNKIETQFRRGLITEDERYRKVIGIWNDATDKVTKALMATLDKFNNVYMMATSGARGNIQQIRQLAGMRGLMADPSGRIIDLPIKANFREGLTVLEYFISTHGARKGLADTALRTADSGYLTRRLVDVAQDVIVREDDCGTTEGIEVREIRDGTEGIEKLHERLEGRVPMEVVVHPETGEVLISQEQVDNHQVMTEEQAQAIEDAGIEKVKIRSVITCKTRYGVCKHCYGKNLATGGNIDIGEAVGIIAAQSIGEPGTQLTMRTFHTGGVAGDDITQGLPRVEELFEARRPKGQAIVAEEDGSIAIREVKGRREIEITKDNGEKNVYAVPFGARIKVKEGQRIEAGDELTEGSVNPHDLLKIKGPAGVQVYLLQEVQRVYRLQGVEINDKHIEVMIRQMLRKVKIEEAGDTELLPGGLIDIFEFEEENRKAVEQGGEPAVAKPVLLGITKASLATDSFLSAASFQETTRVLTEAAIKGKMDPLLGLKENVIIGKLVPAGTGMSRYRNIEVLEEGQPFLEEDRDILLPERDRDYNFLSDEEKIDFDLTLEK.

Residues C60, C62, C75, and C78 each contribute to the Zn(2+) site. Residues D449, D451, and D453 each contribute to the Mg(2+) site. C774, C853, C860, and C863 together coordinate Zn(2+).

It belongs to the RNA polymerase beta' chain family. In terms of assembly, the RNAP catalytic core consists of 2 alpha, 1 beta, 1 beta' and 1 omega subunit. When a sigma factor is associated with the core the holoenzyme is formed, which can initiate transcription. Mg(2+) is required as a cofactor. Requires Zn(2+) as cofactor.

It catalyses the reaction RNA(n) + a ribonucleoside 5'-triphosphate = RNA(n+1) + diphosphate. DNA-dependent RNA polymerase catalyzes the transcription of DNA into RNA using the four ribonucleoside triphosphates as substrates. This is DNA-directed RNA polymerase subunit beta' from Desulforamulus reducens (strain ATCC BAA-1160 / DSM 100696 / MI-1) (Desulfotomaculum reducens).